The chain runs to 189 residues: dCTP deaminase, dUMP-forming (189 aa).

DCTP contacts are provided by residues 101–106, aspartate 119, 127–129, glutamine 148, tyrosine 162, and glutamine 174; these read KSSLGR and TLE. The active-site Proton donor/acceptor is the glutamate 129.

This sequence belongs to the dCTP deaminase family. In terms of assembly, homotrimer.

The enzyme catalyses dCTP + 2 H2O = dUMP + NH4(+) + diphosphate. The protein operates within pyrimidine metabolism; dUMP biosynthesis; dUMP from dCTP: step 1/1. Functionally, bifunctional enzyme that catalyzes both the deamination of dCTP to dUTP and the hydrolysis of dUTP to dUMP without releasing the toxic dUTP intermediate. The chain is dCTP deaminase, dUMP-forming from Rhodococcus opacus (strain B4).